The following is a 320-amino-acid chain: Ribosomal RNA small subunit methyltransferase H (320 aa).

S-adenosyl-L-methionine-binding positions include 42–44, Asp62, Phe86, Asp108, and Gln115; that span reads GGH.

Belongs to the methyltransferase superfamily. RsmH family.

The protein resides in the cytoplasm. It catalyses the reaction cytidine(1402) in 16S rRNA + S-adenosyl-L-methionine = N(4)-methylcytidine(1402) in 16S rRNA + S-adenosyl-L-homocysteine + H(+). Functionally, specifically methylates the N4 position of cytidine in position 1402 (C1402) of 16S rRNA. This is Ribosomal RNA small subunit methyltransferase H from Yersinia pseudotuberculosis serotype O:1b (strain IP 31758).